We begin with the raw amino-acid sequence, 283 residues long: Stage II sporulation protein Q (283 aa).

Residues 22 to 42 (WVFPAIYLVSAAVILTAVLWY) traverse the membrane as a helical segment. Residues 228 to 283 (EKAATQETEESIQQSSEKKDGSTEKGTEEKSGEKKDDSTDKSGSKESSTTEDTEQS) form a disordered region. Basic and acidic residues predominate over residues 243–271 (SEKKDGSTEKGTEEKSGEKKDDSTDKSGS).

In terms of assembly, interacts with SpoIIIAH and SpoIIE.

It is found in the forespore membrane. Involved in forespore engulfment and required for anchoring membrane proteins on the forespore side of the septal membrane. Forms a channel with SpoIIIAH that is open on the forespore end and closed (or gated) on the mother cell end. This allows sigma-E-directed gene expression in the mother-cell compartment of the sporangium to trigger the activation of sigma-G forespore-specific gene expression by a pathway of intercellular signaling. The sequence is that of Stage II sporulation protein Q (spoIIQ) from Bacillus subtilis (strain 168).